The primary structure comprises 161 residues: MSIVTKSIVNADAEARYLSPGELDRIKAFVTGGAARLRIAETLTGSRETIVKQAGDRLFQKRPDIVSPGGNAYGEEMTATCLRDMDYYLRLVTYGVVSGDVTPIEEIGLVGVREMYRSLGTPIEAVAQSVREMKEVASGLMSSDDAAEASAYFDFVIGAMS.

At Asn-71 the chain carries N4-methylasparagine. Residue Cys-81 participates in (2R,3E)-phycocyanobilin binding.

The protein belongs to the phycobiliprotein family. Heterodimer of an alpha and a beta chain. In terms of processing, contains one covalently linked phycocyanobilin chromophore.

The protein localises to the cellular thylakoid membrane. Light-harvesting photosynthetic bile pigment-protein from the phycobiliprotein complex. Allophycocyanin has a maximum absorption at approximately 650 nanometers. This chain is Allophycocyanin alpha chain (apcA), found in Synechocystis sp. (strain PCC 6714) (Aphanocapsa sp. (strain PCC 6714)).